A 117-amino-acid polypeptide reads, in one-letter code: MEAKAVARTIRIAPRKVRLVLDLIRGKNAAEAIAILKLTNKASSPVIEKVLMSALANAEHNYDMNTDELVVKEAYANEGPTLKRFRPRAQGRASAINKRTSHITIVVSDGKEEAKEA.

It belongs to the universal ribosomal protein uL22 family. In terms of assembly, part of the 50S ribosomal subunit.

Its function is as follows. This protein binds specifically to 23S rRNA; its binding is stimulated by other ribosomal proteins, e.g. L4, L17, and L20. It is important during the early stages of 50S assembly. It makes multiple contacts with different domains of the 23S rRNA in the assembled 50S subunit and ribosome. Functionally, the globular domain of the protein is located near the polypeptide exit tunnel on the outside of the subunit, while an extended beta-hairpin is found that lines the wall of the exit tunnel in the center of the 70S ribosome. The protein is Large ribosomal subunit protein uL22 of Staphylococcus aureus (strain USA300).